A 234-amino-acid chain; its full sequence is bZIP transcription factor 27 (234 aa).

A Nuclear localization signal motif is present at residues 152–159 (KKRGQDSD). The bZIP domain maps to 163-213 (GDRRYKRMIKNRESAARSRARKQAYTNELELEIAHLQTENARLKIQQEQLK). Positions 165–184 (RRYKRMIKNRESAARSRARK) are basic motif. Residues 191 to 212 (LELEIAHLQTENARLKIQQEQL) form a leucine-zipper region. Phosphothreonine is present on Thr231.

The protein belongs to the bZIP family. Self-interacts. Interacts with FT and FD/BZIP14. Interacts with CPK33. Post-translationally, phosphorylated. Expressed on the flanks of the shoot apex.

It localises to the nucleus. Its function is as follows. Transcription factor required for the transition to flowering promoted by FT. In Arabidopsis thaliana (Mouse-ear cress), this protein is bZIP transcription factor 27.